The sequence spans 350 residues: Putative [LysW]-lysine/[LysW]-ornithine hydrolase (350 aa).

Residue histidine 72 participates in Zn(2+) binding. Aspartate 74 is a catalytic residue. Aspartate 96 serves as a coordination point for Zn(2+). Glutamate 128 acts as the Proton acceptor in catalysis. 3 residues coordinate Zn(2+): glutamate 129, glutamate 152, and histidine 321.

This sequence belongs to the peptidase M20A family. LysK subfamily. Zn(2+) serves as cofactor. The cofactor is Co(2+).

The protein localises to the cytoplasm. The catalysed reaction is [amino-group carrier protein]-C-terminal-gamma-(L-lysyl)-L-glutamate + H2O = [amino-group carrier protein]-C-terminal-L-glutamate + L-lysine. It catalyses the reaction [amino-group carrier protein]-C-terminal-gamma-(L-ornithyl)-L-glutamate + H2O = [amino-group carrier protein]-C-terminal-L-glutamate + L-ornithine. It functions in the pathway amino-acid biosynthesis; L-lysine biosynthesis via AAA pathway; L-lysine from L-alpha-aminoadipate (Thermus route): step 5/5. It participates in amino-acid biosynthesis; L-arginine biosynthesis. Functionally, catalyzes the release of L-lysine from [LysW]-gamma-L-lysine and the release of L-ornithine from [LysW]-L-ornithine. The protein is Putative [LysW]-lysine/[LysW]-ornithine hydrolase of Aeropyrum pernix (strain ATCC 700893 / DSM 11879 / JCM 9820 / NBRC 100138 / K1).